Consider the following 386-residue polypeptide: Succinate--CoA ligase [ADP-forming] subunit beta (386 aa).

Residues 9–243 (KQLFRKYSIP…PAEDDPAEAE (235 aa)) form the ATP-grasp domain. Residues lysine 45, 52 to 54 (GRG), glutamate 98, valine 101, and glutamate 106 contribute to the ATP site. Residues asparagine 198 and aspartate 212 each coordinate Mg(2+). Substrate contacts are provided by residues asparagine 263 and 320 to 322 (GIL).

It belongs to the succinate/malate CoA ligase beta subunit family. In terms of assembly, heterotetramer of two alpha and two beta subunits. Mg(2+) is required as a cofactor.

The catalysed reaction is succinate + ATP + CoA = succinyl-CoA + ADP + phosphate. It catalyses the reaction GTP + succinate + CoA = succinyl-CoA + GDP + phosphate. The protein operates within carbohydrate metabolism; tricarboxylic acid cycle; succinate from succinyl-CoA (ligase route): step 1/1. Its function is as follows. Succinyl-CoA synthetase functions in the citric acid cycle (TCA), coupling the hydrolysis of succinyl-CoA to the synthesis of either ATP or GTP and thus represents the only step of substrate-level phosphorylation in the TCA. The beta subunit provides nucleotide specificity of the enzyme and binds the substrate succinate, while the binding sites for coenzyme A and phosphate are found in the alpha subunit. This is Succinate--CoA ligase [ADP-forming] subunit beta from Desulfotalea psychrophila (strain LSv54 / DSM 12343).